We begin with the raw amino-acid sequence, 121 residues long: Large ribosomal subunit protein uL14c (121 aa).

The protein belongs to the universal ribosomal protein uL14 family. In terms of assembly, part of the 50S ribosomal subunit.

The protein resides in the plastid. It is found in the chloroplast. In terms of biological role, binds to 23S rRNA. This Guillardia theta (Cryptophyte) protein is Large ribosomal subunit protein uL14c.